The sequence spans 675 residues: DNA ligase (675 aa).

Residues 35-39, 84-85, and Glu-116 contribute to the NAD(+) site; these read DEAYD and SL. Lys-118 acts as the N6-AMP-lysine intermediate in catalysis. Residues Arg-139, Glu-180, Lys-296, and Lys-320 each contribute to the NAD(+) site. Cys-414, Cys-417, Cys-432, and Cys-437 together coordinate Zn(2+). One can recognise a BRCT domain in the interval 597-675; that stretch reads PVDAFWNGKT…EREFLERLGM (79 aa).

This sequence belongs to the NAD-dependent DNA ligase family. LigA subfamily. The cofactor is Mg(2+). Mn(2+) serves as cofactor.

The enzyme catalyses NAD(+) + (deoxyribonucleotide)n-3'-hydroxyl + 5'-phospho-(deoxyribonucleotide)m = (deoxyribonucleotide)n+m + AMP + beta-nicotinamide D-nucleotide.. DNA ligase that catalyzes the formation of phosphodiester linkages between 5'-phosphoryl and 3'-hydroxyl groups in double-stranded DNA using NAD as a coenzyme and as the energy source for the reaction. It is essential for DNA replication and repair of damaged DNA. In Syntrophobacter fumaroxidans (strain DSM 10017 / MPOB), this protein is DNA ligase.